The primary structure comprises 296 residues: Cbb3-type cytochrome c oxidase subunit CcoP (296 aa).

Topologically, residues 1-31 (MAQNYKDELSGVETTGHEWDGLRELNNPLPK) are cytoplasmic. A helical membrane pass occupies residues 32-52 (WWLYLFYVCIAWAMVYYVFYP). The Periplasmic portion of the chain corresponds to 53 to 296 (AWPLGKTYTK…VYVHNLGGGK (244 aa)). Cytochrome c domains lie at 108-200 (FAMA…LSLN) and 207-293 (GKVA…HNLG). The heme c site is built by Cys-121, Cys-124, His-125, Met-175, Cys-220, Cys-223, His-224, and Met-270.

It belongs to the CcoP / FixP family. Component of the cbb3-type cytochrome c oxidase at least composed of CcoN, CcoO, CcoQ and CcoP. Requires heme c as cofactor.

The protein localises to the cell inner membrane. The protein operates within energy metabolism; oxidative phosphorylation. C-type cytochrome. Part of the cbb3-type cytochrome c oxidase complex. CcoP subunit is required for transferring electrons from donor cytochrome c via its heme groups to CcoO subunit. From there, electrons are shuttled to the catalytic binuclear center of CcoN subunit where oxygen reduction takes place. The complex also functions as a proton pump. The chain is Cbb3-type cytochrome c oxidase subunit CcoP from Azospirillum sp. (strain B510).